Here is a 385-residue protein sequence, read N- to C-terminus: Deoxyguanosinetriphosphate triphosphohydrolase-like protein (385 aa).

Basic and acidic residues predominate over residues 1–14 (MTEGVEGRSQERSD). The interval 1 to 23 (MTEGVEGRSQERSDLAGFAARSA) is disordered. The HD domain maps to 75–204 (RLTHSLEVAQ…INYADEIAYN (130 aa)).

It belongs to the dGTPase family. Type 2 subfamily.

The protein is Deoxyguanosinetriphosphate triphosphohydrolase-like protein of Geobacter metallireducens (strain ATCC 53774 / DSM 7210 / GS-15).